The primary structure comprises 725 residues: Sesterterpene synthase btcA (725 aa).

Residues 1-333 form a terpene cyclase region; it reads MANPPVTEWK…CANCPRHHAW (333 aa). D100 contributes to the Mg(2+) binding site. Substrate is bound by residues D100, N236, 240–244, and 329–330; these read SWGRE and RH. Residues 100-104 carry the DDXXD 1 motif; it reads DDATE. An NSE/DTE motif is present at residues 236–244; sequence NDYWSWGRE. The interval 334–722 is prenyltransferase; the sequence is KEQDQAVHAV…MLYVLLQTLS (389 aa). A disordered region spans residues 352-426; the sequence is VEAQSPSSAT…PSSLHLLKSP (75 aa). A compositionally biased stretch (polar residues) spans 355-364; that stretch reads QSPSSATHTA. Over residues 375-419 the composition is skewed to low complexity; it reads APSPISSPSSSSSAKPSSSSAADSSSCTSTSQHSPSETDSTPPSS. Residues K442, R445, and H474 each contribute to the isopentenyl diphosphate site. Residues D481 and D485 each coordinate Mg(2+). Residues 481–485 carry the DDXXD 2 motif; it reads DDIQD. Position 490 (R490) interacts with dimethylallyl diphosphate. R491 contacts isopentenyl diphosphate. Residues K568, T569, Q604, N611, K621, and K631 each coordinate dimethylallyl diphosphate.

In the N-terminal section; belongs to the terpene synthase family. It in the C-terminal section; belongs to the FPP/GGPP synthase family. In terms of assembly, hexamer. It depends on Mg(2+) as a cofactor.

It catalyses the reaction isopentenyl diphosphate + (2E,6E)-farnesyl diphosphate = (2E,6E,10E)-geranylgeranyl diphosphate + diphosphate. The enzyme catalyses isopentenyl diphosphate + (2E,6E,10E)-geranylgeranyl diphosphate = (2E,6E,10E,14E)-geranylfarnesyl diphosphate + diphosphate. Its pathway is secondary metabolite biosynthesis; terpenoid biosynthesis. Functionally, bifunctional terpene synthase; part of the gene cluster that mediates the biosynthesis of betaestacins. The bifunctional terpene synthase btcA converts isopentenyl diphosphate (IPP) and dimethylallyl diphosphate (DMAPP) into the sesterterpene betaestacin I. The C-terminal prenyltransferase (PT) domain of btcA catalyzes formation of GFPP, whereas the N-terminal terpene cyclase (TC) domain catalyzes the cyclization of GFPP into betaestacin I. The cytochrome P450 monooxygenase btcB is then responsible for the six-step oxidation of betaestacin I to yield betaestacin II. The roles of the cytochrome P450 monooxygenase btcC and the alpha-ketoglutarate-dependent dioxygenase btcD have not been identified yet. This Neocamarosporium betae (Beet black rot fungus) protein is Sesterterpene synthase btcA.